We begin with the raw amino-acid sequence, 232 residues long: Chromosome partition protein MukE (232 aa).

The interval 203–232 (HTKEPSQGSLLSEEDQEEQAQEEMTEEGEA) is disordered. Positions 214-232 (SEEDQEEQAQEEMTEEGEA) are enriched in acidic residues.

This sequence belongs to the MukE family. As to quaternary structure, interacts, and probably forms a ternary complex, with MukF and MukB. The complex formation is stimulated by calcium or magnesium.

The protein localises to the cytoplasm. It is found in the nucleoid. In terms of biological role, involved in chromosome condensation, segregation and cell cycle progression. May participate in facilitating chromosome segregation by condensation DNA from both sides of a centrally located replisome during cell division. Probably acts via its interaction with MukB and MukF. The sequence is that of Chromosome partition protein MukE from Vibrio parahaemolyticus serotype O3:K6 (strain RIMD 2210633).